The primary structure comprises 387 residues: Killer cell lectin-like receptor subfamily G member 2 (387 aa).

The tract at residues 1-105 (MEPPQVPAEA…SGEPAPASWA (105 aa)) is disordered. Over residues 15-27 (ASEDSPRPERTGW) the composition is skewed to basic and acidic residues. Serine 143 bears the Phosphoserine mark. The disordered stretch occupies residues 155–174 (QWLPRAPSPGSTWSRGSPLA). The chain crosses the membrane as a helical span at residues 241–261 (WALVVMAVLLAVCTVAVVALA). The 106-residue stretch at 278–383 (SQEQCYYLSE…CSSPRPWVCA (106 aa)) folds into the C-type lectin domain. 2 disulfide bridges follow: cysteine 299–cysteine 382 and cysteine 361–cysteine 374.

It localises to the membrane. The polypeptide is Killer cell lectin-like receptor subfamily G member 2 (Klrg2) (Mus musculus (Mouse)).